The chain runs to 1322 residues: Transcription elongation factor SPT6-like (1322 aa).

Over residues 1–17 (MNRIDEEPQIHEDPVEN) the composition is skewed to basic and acidic residues. Disordered regions lie at residues 1–65 (MNRI…KKDE) and 90–113 (KRLK…DLSH). A compositionally biased stretch (acidic residues) spans 18–33 (REEDDEDEDDQYEFDD). Residues 48–65 (EQRHCSEKKSRSRRKKDE) show a composition bias toward basic and acidic residues. Residues 97–110 (EEEDKINNDDDDDD) show a composition bias toward acidic residues. One can recognise an S1 motif domain in the interval 1017-1088 (GRIVQATVKK…QRYHVLLVCK (72 aa)).

The protein belongs to the SPT6 family.

The protein resides in the nucleus. Functionally, transcription elongation factor that enhances the transcription elongation by RNA polymerase II (RNAPII). The polypeptide is Transcription elongation factor SPT6-like (Arabidopsis thaliana (Mouse-ear cress)).